The chain runs to 363 residues: NAD(P)H-quinone oxidoreductase subunit 1, chloroplastic (363 aa).

Transmembrane regions (helical) follow at residues 27 to 47, 98 to 118, 127 to 147, 248 to 268, 300 to 320, and 336 to 356; these read IWLLVPIFTPVSGITIGVLVI, FSIGPSIAIISILLSYSVIPF, LSIGVFLWIAISSIAPIGLLM, YSGIKFGLFYVASYLNLLVSS, VFGTTIGIFITLAKAYLFLFI, and LLNLGWKFLLPISLGNLLLTT.

The protein belongs to the complex I subunit 1 family. As to quaternary structure, NDH is composed of at least 16 different subunits, 5 of which are encoded in the nucleus.

It localises to the plastid. Its subcellular location is the chloroplast thylakoid membrane. It carries out the reaction a plastoquinone + NADH + (n+1) H(+)(in) = a plastoquinol + NAD(+) + n H(+)(out). The catalysed reaction is a plastoquinone + NADPH + (n+1) H(+)(in) = a plastoquinol + NADP(+) + n H(+)(out). NDH shuttles electrons from NAD(P)H:plastoquinone, via FMN and iron-sulfur (Fe-S) centers, to quinones in the photosynthetic chain and possibly in a chloroplast respiratory chain. The immediate electron acceptor for the enzyme in this species is believed to be plastoquinone. Couples the redox reaction to proton translocation, and thus conserves the redox energy in a proton gradient. The protein is NAD(P)H-quinone oxidoreductase subunit 1, chloroplastic of Platanus occidentalis (Sycamore).